Reading from the N-terminus, the 406-residue chain is chitinase-like effector (406 aa).

An N-terminal signal peptide occupies residues 1 to 23 (MLTLLPSLILLLSTLSLSTPANA). Residues 26–405 (AIAKAYYPGW…DAVRHGAGFK (380 aa)) form the GH18 domain. Chitin is bound by residues Tyr138 and Trp384.

This sequence belongs to the glycosyl hydrolase 18 family.

The protein resides in the secreted. In terms of biological role, catalytically impaired chitinase that binds efficiently to chitin, but not to chitosan, xylan, or cellulose. Despite the lack of chitinolytic activity, retains substrate binding specificity and acts as an effector to prevent chitin-triggered immunity by sequestering immunogenic chitin fragments. In Moniliophthora roreri (Frosty pod rot fungus), this protein is chitinase-like effector (Chi).